A 720-amino-acid chain; its full sequence is Probable GTPase-activating protein GYL1 (720 aa).

Met-1 is subject to N-acetylmethionine. Positions 1–52 (MNSNEDIHEERIEVPRTPHQTQPEKDSDRIALRDEISVPEGDEKAYSDEKVE) are enriched in basic and acidic residues. The interval 1–132 (MNSNEDIHEE…TSPPLPPRAD (132 aa)) is disordered. Residue Thr-17 is modified to Phosphothreonine. Ser-37 is subject to Phosphoserine. Residues 54-66 (ATTNASSNFGSNE) show a composition bias toward polar residues. A Phosphoserine modification is found at Ser-73. Positions 95–108 (SKTILPSDDLSQQL) are enriched in polar residues. Residues 111-120 (EESKVEEALK) are compositionally biased toward basic and acidic residues. Ser-139 is subject to Phosphoserine. 2 disordered regions span residues 144–164 (SLPP…RPQL) and 179–210 (APHG…PRRI). Polar residues predominate over residues 184–196 (ATPSKSPTSAVGN). Positions 297–477 (GIPAAYRLVV…RIGDMVFLEG (181 aa)) constitute a Rab-GAP TBC domain. Lys-498 is covalently cross-linked (Glycyl lysine isopeptide (Lys-Gly) (interchain with G-Cter in SUMO)). A coiled-coil region spans residues 572–696 (QYKSITEKNL…EIKTANKNGT (125 aa)).

This sequence belongs to the GYP5 family. As to quaternary structure, interacts with GYP5 and RVS167. Is part of SEC4-containing complexes.

It localises to the cytoplasm. The protein resides in the bud. The protein localises to the bud neck. Its function is as follows. Probable GTPase-activating protein which stimulates the GTP hydrolysis rate by GYP5 of YPT1 and SEC4. Involved in ER to Golgi trafficking and polarized exocytosis. The polypeptide is Probable GTPase-activating protein GYL1 (GYL1) (Saccharomyces cerevisiae (strain ATCC 204508 / S288c) (Baker's yeast)).